A 168-amino-acid chain; its full sequence is Peptidoglycan-associated lipoprotein (168 aa).

Positions 1 to 24 are cleaved as a signal peptide; it reads MRRIQSIARSPIAIALFMSLAVAG. The N-palmitoyl cysteine moiety is linked to residue Cys-25. The S-diacylglycerol cysteine moiety is linked to residue Cys-25. One can recognise an OmpA-like domain in the interval 51 to 167; it reads QDFTVNVGDR…RAVTVLNGAG (117 aa).

It belongs to the Pal lipoprotein family. As to quaternary structure, the Tol-Pal system is composed of five core proteins: the inner membrane proteins TolA, TolQ and TolR, the periplasmic protein TolB and the outer membrane protein Pal. They form a network linking the inner and outer membranes and the peptidoglycan layer. In terms of processing, the N-terminus is blocked.

The protein localises to the cell outer membrane. In terms of biological role, part of the Tol-Pal system, which plays a role in outer membrane invagination during cell division and is important for maintaining outer membrane integrity. This chain is Peptidoglycan-associated lipoprotein, found in Brucella abortus biovar 1 (strain 9-941).